Reading from the N-terminus, the 103-residue chain is MPAKIRQNDEVIVLTGKDKGKRGKVTKVLPNGKVFVEGINIITKHEKPVPALGKAGGLVKKEAAIDASNVAIFNPKTNKADRVGFRFEDGKKVRFFKSNNEII.

The protein belongs to the universal ribosomal protein uL24 family. In terms of assembly, part of the 50S ribosomal subunit.

Functionally, one of two assembly initiator proteins, it binds directly to the 5'-end of the 23S rRNA, where it nucleates assembly of the 50S subunit. One of the proteins that surrounds the polypeptide exit tunnel on the outside of the subunit. The chain is Large ribosomal subunit protein uL24 from Haemophilus influenzae (strain ATCC 51907 / DSM 11121 / KW20 / Rd).